The chain runs to 720 residues: Methionine--tRNA ligase (720 aa).

Residues 27 to 37 (PYANGQIHIGH) carry the 'HIGH' region motif. Zn(2+)-binding residues include Cys158, Cys161, Cys171, and Cys174. Positions 348 to 352 (KMSKS) match the 'KMSKS' region motif. Position 351 (Lys351) interacts with ATP. Residues 614-720 (DFAKVDLRIA…SGAKPGMRVK (107 aa)) form the tRNA-binding domain.

This sequence belongs to the class-I aminoacyl-tRNA synthetase family. MetG type 1 subfamily. Homodimer. Zn(2+) serves as cofactor.

It is found in the cytoplasm. The enzyme catalyses tRNA(Met) + L-methionine + ATP = L-methionyl-tRNA(Met) + AMP + diphosphate. Is required not only for elongation of protein synthesis but also for the initiation of all mRNA translation through initiator tRNA(fMet) aminoacylation. The protein is Methionine--tRNA ligase of Burkholderia ambifaria (strain MC40-6).